Consider the following 309-residue polypeptide: Spermatid maturation protein 1 (309 aa).

A helical transmembrane segment spans residues 29 to 49; that stretch reads VLLLLGLIICINISINIVTLL. Residues 209–231 form a disordered region; that stretch reads PPPPSPEAPSHKNGGEGAVPEAE. Residues 259 to 285 are a coiled coil; the sequence is RIVYDARDMRRRLRELTREVEALSGCY.

It is found in the membrane. It localises to the cytoplasm. Required for proper cytoplasm removal during spermatogenesis. The protein is Spermatid maturation protein 1 (SPEM1) of Homo sapiens (Human).